The sequence spans 1204 residues: E3 ubiquitin-protein ligase DZIP3 (1204 aa).

2 disordered regions span residues 1-22 and 640-681; these read MDSL…QTKE and SIPS…EQVS. Positions 649-658 are enriched in basic and acidic residues; the sequence is SVKDLQEVKS. Residues 659–668 are compositionally biased toward basic residues; that stretch reads KTKKKKRTKS. 2 coiled-coil regions span residues 746 to 861 and 906 to 941; these read KETE…TSRA and QLKA…KVKQ. A compositionally biased stretch (basic and acidic residues) spans 1088–1098; the sequence is PKKSESEEKSA. The tract at residues 1088–1141 is disordered; sequence PKKSESEEKSAQDGNNASPSHTASQPNAPQDPKSAQGSATWEGDKDMDNEEEEE. Residues 1099–1126 show a composition bias toward polar residues; that stretch reads QDGNNASPSHTASQPNAPQDPKSAQGSA. The span at 1132-1141 shows a compositional bias: acidic residues; the sequence is KDMDNEEEEE. An RING-type; atypical zinc finger spans residues 1144–1184; that stretch reads CVICHENLSPENLSVLPCAHKFHSQCIRPWLMQQGTCPTCR.

As to quaternary structure, probably interacts with DAZL.

The protein localises to the cytoplasm. It catalyses the reaction S-ubiquitinyl-[E2 ubiquitin-conjugating enzyme]-L-cysteine + [acceptor protein]-L-lysine = [E2 ubiquitin-conjugating enzyme]-L-cysteine + N(6)-ubiquitinyl-[acceptor protein]-L-lysine.. Its pathway is protein modification; protein ubiquitination. Its function is as follows. E3 Ubiquitin ligase proteins mediate ubiquitination and subsequent proteasomal degradation of target proteins. E3 ubiquitin ligases accept ubiquitin from an E2 ubiquitin-conjugating enzyme in the form of a thioester and then directly transfers the ubiquitin to targeted substrates. Able to specifically bind RNA. The sequence is that of E3 ubiquitin-protein ligase DZIP3 (Dzip3) from Mus musculus (Mouse).